The chain runs to 944 residues: Translation initiation factor IF-2 (944 aa).

Residues 61–281 (IQANQPAKNP…TAKNNKSHKI (221 aa)) form a disordered region. A compositionally biased stretch (polar residues) spans 132–150 (TFENQTPPTENTPKVVSHS). Basic and acidic residues predominate over residues 151–169 (QIEKAKQKLQEIQKSREAL). Low complexity predominate over residues 175-185 (SNANNASNTNN). The segment covering 186–203 (AKKEISEVKKQEQEIKRH) has biased composition (basic and acidic residues). The span at 204 to 215 (ENIKRRTGFRVI) shows a compositional bias: basic residues. Positions 244–259 (EDIKKEWQEKDKQEAK) are enriched in basic and acidic residues. Residues 443 to 612 (ERPPVVTIMG…LIQADIMELK (170 aa)) form the tr-type G domain. The G1 stretch occupies residues 452–459 (GHVDHGKT). 452 to 459 (GHVDHGKT) is a GTP binding site. A G2 region spans residues 477 to 481 (GITQH). The interval 498–501 (DTPG) is G3. Residues 498 to 502 (DTPGH) and 552 to 555 (NKMD) contribute to the GTP site. A G4 region spans residues 552–555 (NKMD). The G5 stretch occupies residues 588–590 (SAK).

Belongs to the TRAFAC class translation factor GTPase superfamily. Classic translation factor GTPase family. IF-2 subfamily.

Its subcellular location is the cytoplasm. One of the essential components for the initiation of protein synthesis. Protects formylmethionyl-tRNA from spontaneous hydrolysis and promotes its binding to the 30S ribosomal subunits. Also involved in the hydrolysis of GTP during the formation of the 70S ribosomal complex. This Helicobacter pylori (strain HPAG1) protein is Translation initiation factor IF-2.